Reading from the N-terminus, the 365-residue chain is Ribosomal RNA large subunit methyltransferase F (365 aa).

Residues 1-50 (MSKPAVKSVPSATAKTATRAVNIRQKVKAPKQAKPEAKGRAKPSKDKPRA) are disordered. The segment covering 33–50 (AKPEAKGRAKPSKDKPRA) has biased composition (basic and acidic residues).

This sequence belongs to the methyltransferase superfamily. METTL16/RlmF family.

The protein localises to the cytoplasm. The enzyme catalyses adenosine(1618) in 23S rRNA + S-adenosyl-L-methionine = N(6)-methyladenosine(1618) in 23S rRNA + S-adenosyl-L-homocysteine + H(+). Functionally, specifically methylates the adenine in position 1618 of 23S rRNA. This is Ribosomal RNA large subunit methyltransferase F from Shewanella baltica (strain OS155 / ATCC BAA-1091).